The chain runs to 161 residues: Large ribosomal subunit protein bL9 (161 aa).

It belongs to the bacterial ribosomal protein bL9 family.

Binds to the 23S rRNA. This Protochlamydia amoebophila (strain UWE25) protein is Large ribosomal subunit protein bL9.